The sequence spans 202 residues: LexA repressor (202 aa).

A DNA-binding region (H-T-H motif) is located at residues 28 to 48; sequence IAEIARAIGVSSPHGVREQLR. Residues serine 120 and lysine 157 each act as for autocatalytic cleavage activity in the active site.

The protein belongs to the peptidase S24 family. As to quaternary structure, homodimer.

The catalysed reaction is Hydrolysis of Ala-|-Gly bond in repressor LexA.. Its function is as follows. Represses a number of genes involved in the response to DNA damage (SOS response), including recA and lexA. In the presence of single-stranded DNA, RecA interacts with LexA causing an autocatalytic cleavage which disrupts the DNA-binding part of LexA, leading to derepression of the SOS regulon and eventually DNA repair. This is LexA repressor from Methylococcus capsulatus (strain ATCC 33009 / NCIMB 11132 / Bath).